The primary structure comprises 550 residues: Hydroxylamine reductase (550 aa).

[2Fe-2S] cluster is bound by residues Cys-3, Cys-6, Cys-18, and Cys-25. His-249, Glu-273, Cys-317, Cys-405, Cys-433, Cys-458, Glu-492, and Lys-494 together coordinate hybrid [4Fe-2O-2S] cluster. Cys-405 carries the cysteine persulfide modification.

This sequence belongs to the HCP family. Requires [2Fe-2S] cluster as cofactor. Hybrid [4Fe-2O-2S] cluster serves as cofactor.

Its subcellular location is the cytoplasm. The enzyme catalyses A + NH4(+) + H2O = hydroxylamine + AH2 + H(+). Catalyzes the reduction of hydroxylamine to form NH(3) and H(2)O. The protein is Hydroxylamine reductase of Yersinia pseudotuberculosis serotype O:1b (strain IP 31758).